The primary structure comprises 208 residues: MTKGILGKKVGMTQIFTESGEFIPVTVIEATPNVVLQVKTVETDGYEAVQVGFDDKREVLSNKPAKGHVAKANTAPKRFIREFKNIEGLEVGAELSVEQFEAGDVVDVTGTSKGKGFQGVIKRHGQSRGPMAHGSRYHRRPGSMGPVAPNRVFKNKRLAGRMGGNRVTVQNLEIVQVIPEKNVILVKGNVPGAKKSLITIKSAVKAAK.

The tract at residues 116–148 (GFQGVIKRHGQSRGPMAHGSRYHRRPGSMGPVA) is disordered.

This sequence belongs to the universal ribosomal protein uL3 family. In terms of assembly, part of the 50S ribosomal subunit. Forms a cluster with proteins L14 and L19.

In terms of biological role, one of the primary rRNA binding proteins, it binds directly near the 3'-end of the 23S rRNA, where it nucleates assembly of the 50S subunit. In Streptococcus pyogenes serotype M5 (strain Manfredo), this protein is Large ribosomal subunit protein uL3.